The primary structure comprises 143 residues: Large ribosomal subunit protein uL11 (143 aa).

This sequence belongs to the universal ribosomal protein uL11 family. As to quaternary structure, part of the ribosomal stalk of the 50S ribosomal subunit. Interacts with L10 and the large rRNA to form the base of the stalk. L10 forms an elongated spine to which L12 dimers bind in a sequential fashion forming a multimeric L10(L12)X complex. Post-translationally, one or more lysine residues are methylated.

In terms of biological role, forms part of the ribosomal stalk which helps the ribosome interact with GTP-bound translation factors. In Halorhodospira halophila (strain DSM 244 / SL1) (Ectothiorhodospira halophila (strain DSM 244 / SL1)), this protein is Large ribosomal subunit protein uL11.